Consider the following 200-residue polypeptide: uncharacterized protein (200 aa).

The N-terminal stretch at 1 to 19 (MNAMFHSLFALSFVSLVAS) is a signal peptide. Residues 148–168 (FMVIVSLAAFCISVLAGLALQ) form a helical membrane-spanning segment.

It is found in the membrane. This is an uncharacterized protein from Caenorhabditis elegans.